The chain runs to 126 residues: Small ribosomal subunit protein eS6 (126 aa).

Belongs to the eukaryotic ribosomal protein eS6 family.

The chain is Small ribosomal subunit protein eS6 from Methanothermobacter thermautotrophicus (strain ATCC 29096 / DSM 1053 / JCM 10044 / NBRC 100330 / Delta H) (Methanobacterium thermoautotrophicum).